Reading from the N-terminus, the 189-residue chain is dCTP deaminase (189 aa).

DCTP is bound by residues 112 to 117 (KSTYAR), 136 to 138 (TLE), Gln-157, Tyr-171, and Gln-181. Catalysis depends on Glu-138, which acts as the Proton donor/acceptor.

Belongs to the dCTP deaminase family. In terms of assembly, homotrimer.

The enzyme catalyses dCTP + H2O + H(+) = dUTP + NH4(+). It participates in pyrimidine metabolism; dUMP biosynthesis; dUMP from dCTP (dUTP route): step 1/2. Functionally, catalyzes the deamination of dCTP to dUTP. This is dCTP deaminase from Xanthomonas campestris pv. campestris (strain 8004).